The chain runs to 158 residues: Small ribosomal subunit protein uS7 (158 aa).

The protein belongs to the universal ribosomal protein uS7 family. Part of the 30S ribosomal subunit. Contacts proteins S9 and S11.

Functionally, one of the primary rRNA binding proteins, it binds directly to 16S rRNA where it nucleates assembly of the head domain of the 30S subunit. Is located at the subunit interface close to the decoding center, probably blocks exit of the E-site tRNA. The chain is Small ribosomal subunit protein uS7 from Leptospira biflexa.